Reading from the N-terminus, the 193-residue chain is Thymidine kinase (193 aa).

ATP is bound by residues 9 to 16 (ASMNAGKS) and 87 to 90 (DEAQ). Glu-88 functions as the Proton acceptor in the catalytic mechanism. 4 residues coordinate Zn(2+): Cys-145, Cys-147, Cys-182, and His-185.

Belongs to the thymidine kinase family. In terms of assembly, homotetramer.

It localises to the cytoplasm. The catalysed reaction is thymidine + ATP = dTMP + ADP + H(+). This chain is Thymidine kinase, found in Zymomonas mobilis subsp. mobilis (strain ATCC 31821 / ZM4 / CP4).